Here is a 108-residue protein sequence, read N- to C-terminus: Parvalbumin beta 1 (108 aa).

A1 carries the post-translational modification N-acetylalanine. 2 EF-hand domains span residues 38–73 (KXXD…FCPK) and 77–108 (LTDA…LVKQ). Ca(2+)-binding residues include D51, D53, S55, F57, E59, E62, D90, D92, D94, M96, and E101.

The protein belongs to the parvalbumin family.

In muscle, parvalbumin is thought to be involved in relaxation after contraction. It binds two calcium ions. This Oncorhynchus mykiss (Rainbow trout) protein is Parvalbumin beta 1.